Consider the following 1325-residue polypeptide: Bile salt export pump (1325 aa).

Residues 1–62 (MSDAVILRSV…FSSTTDIWLM (62 aa)) are Cytoplasmic-facing. Residues 62–385 (MFVGSLCAFL…ASSCLEAFAT (324 aa)) enclose the ABC transmembrane type-1 1 domain. The helical transmembrane segment at 63–83 (FVGSLCAFLHGLSHPGVLLIF) threads the bilayer. At 84 to 147 (GTMTDVFIAY…MIKFASYYAG (64 aa)) the chain is on the extracellular side. Residues asparagine 109, asparagine 116, asparagine 122, and asparagine 125 are each glycosylated (N-linked (GlcNAc...) asparagine). Residues 148 to 168 (IALLVLITGYIQICFWVIAAA) form a helical membrane-spanning segment. The Cytoplasmic portion of the chain corresponds to 169–240 (RQIQKMRKIS…FLLGFYQGWK (72 aa)). Residues 241–261 (LTLVIISVSPLIGIGAAIIGL) traverse the membrane as a helical segment. The Extracellular portion of the chain corresponds to 262–319 (SVSKFTDYELKAYAKAGSVADEVISSMRTVAAFGGEKKEVERYEKNLVFAQRWGIRKG). A helical membrane pass occupies residues 320–340 (IVMGFFTGFMWCLIFLCYALA). The Cytoplasmic portion of the chain corresponds to 341-353 (FWYGSKLVLEDGE). The chain crosses the membrane as a helical span at residues 354-374 (YTAGTLVQIFLSILLGALNLG). Residues asparagine 375, asparagine 424, and asparagine 440 are each glycosylated (N-linked (GlcNAc...) asparagine). Topologically, residues 375–759 (NASSCLEAFA…KFNAPEWPYM (385 aa)) are extracellular. The region spanning 420 to 656 (IEFHNVTFHY…KGVYFTLVTL (237 aa)) is the ABC transporter 1 domain. Residue 455–462 (GSSGSGKS) coordinates ATP. Residue asparagine 591 is glycosylated (N-linked (GlcNAc...) asparagine). Residues 759–1047 (MLFGAVGAAV…ASSYTPSYAK (289 aa)) enclose the ABC transmembrane type-1 2 domain. Residues 760-780 (LFGAVGAAVNGSVTPLYAFLF) form a helical membrane-spanning segment. Over 781–798 (SQILGTFSLPDKEEQRSQ) the chain is Cytoplasmic. The helical transmembrane segment at 799–819 (INGVCLLFVAVGCVSLCTQFL) threads the bilayer. Over 820-894 (QGYAFAKSGE…NSFTNVTVAM (75 aa)) the chain is Extracellular. A glycan (N-linked (GlcNAc...) asparagine) is linked at asparagine 889. The chain crosses the membrane as a helical span at residues 895-915 (IIAFFFSWKLSLVIMCFFPFL). The Cytoplasmic segment spans residues 916 to 983 (ALSGALQTRM…PFKTAFRKAN (68 aa)). A helical membrane pass occupies residues 984–1004 (VYGFCFGFSQCIVFVANSASY). Over 1005-1014 (RYGGYLIPNE) the chain is Extracellular. A helical membrane pass occupies residues 1015-1035 (GLHFSYVFRVISSVVLSATAL). The Cytoplasmic segment spans residues 1036–1325 (GRASSYTPSY…KLVTTGAPIS (290 aa)). In terms of domain architecture, ABC transporter 2 spans 1082 to 1320 (VDFVDCKFTY…KGAYYKLVTT (239 aa)). 1117–1124 (GSSGCGKS) is an ATP binding site.

Belongs to the ABC transporter superfamily. ABCB family. Multidrug resistance exporter (TC 3.A.1.201) subfamily. In terms of assembly, interacts with HAX1. Interacts with the adapter protein complex 2 (AP-2) throught AP2A2 or AP2A1; this interaction regulates cell membrane expression of ABCB11 through its internalization in a clathrin-dependent manner and its subsequent degradation. N-glycosylated. In terms of processing, ubiquitinated; short-chain ubiquitination regulates cell-Surface expression of ABCB11. Liver.

The protein localises to the apical cell membrane. Its subcellular location is the recycling endosome membrane. It localises to the endosome. It is found in the cell membrane. It catalyses the reaction cholate(in) + ATP + H2O = cholate(out) + ADP + phosphate + H(+). It carries out the reaction taurocholate(in) + ATP + H2O = taurocholate(out) + ADP + phosphate + H(+). The enzyme catalyses glycocholate(in) + ATP + H2O = glycocholate(out) + ADP + phosphate + H(+). The catalysed reaction is glycochenodeoxycholate(in) + ATP + H2O = glycochenodeoxycholate(out) + ADP + phosphate + H(+). It catalyses the reaction taurochenodeoxycholate(in) + ATP + H2O = taurochenodeoxycholate(out) + ADP + phosphate + H(+). It carries out the reaction glycoursodeoxycholate(in) + ATP + H2O = glycoursodeoxycholate(out) + ADP + phosphate + H(+). The enzyme catalyses tauroursodeoxycholate(in) + ATP + H2O = tauroursodeoxycholate(out) + ADP + phosphate + H(+). The catalysed reaction is taurodeoxycholate(in) + ATP + H2O = taurodeoxycholate(out) + ADP + phosphate + H(+). It catalyses the reaction taurolithocholate 3-sulfate(in) + ATP + H2O = taurolithocholate 3-sulfate(out) + ADP + phosphate + H(+). It carries out the reaction pravastatin(in) + ATP + H2O = pravastatin(out) + ADP + phosphate + H(+). With respect to regulation, the uptake of taurocholate is inhibited by taurolithocholate sulfate with an IC(50) of 9 uM. Pravastatin competitively inhibits the transport of taurocholic acid. Cyclosporin A, glibenclamide, rifampicin and troglitazonestrongly competitively inhibit the transport activity of taurocholate. The canalicular transport activity of taurocholate is strongly dependent on canalicular membrane cholesterol content. The uptake of taurocholate is increased by short- and medium-chain fatty acids. Cholesterol increases transport capacity of taurocholate without affecting the affinity for the substrate. In terms of biological role, catalyzes the transport of the major hydrophobic bile salts, such as taurine and glycine-conjugated cholic acid across the canalicular membrane of hepatocytes in an ATP-dependent manner, therefore participates in hepatic bile acid homeostasis and consequently to lipid homeostasis through regulation of biliary lipid secretion in a bile salts dependent manner. Transports taurine-conjugated bile salts more rapidly than glycine-conjugated bile salts. Also transports non-bile acid compounds, such as pravastatin and fexofenadine in an ATP-dependent manner and may be involved in their biliary excretion. This chain is Bile salt export pump, found in Canis lupus familiaris (Dog).